Consider the following 416-residue polypeptide: Cyclin-L1-1 (416 aa).

The tract at residues K286–H416 is disordered. Composition is skewed to basic and acidic residues over residues P304–G315, S328–K374, R384–D393, and R401–K410.

It belongs to the cyclin family. Cyclin L subfamily. Forms a complex with CDKG1. Interacts with MOS4 and associates with the spliceosome.

The protein resides in the nucleus. Functionally, cognate cyclin for CDKG1. Required for synapsis and male meiosis, and for the proper splicing of specific resistance (R) genes. Involved in regulation of DNA methylation and transcriptional silencing. The sequence is that of Cyclin-L1-1 (CYCL1-1) from Arabidopsis thaliana (Mouse-ear cress).